A 120-amino-acid chain; its full sequence is Large ribosomal subunit protein bL20 (120 aa).

This sequence belongs to the bacterial ribosomal protein bL20 family.

Functionally, binds directly to 23S ribosomal RNA and is necessary for the in vitro assembly process of the 50S ribosomal subunit. It is not involved in the protein synthesizing functions of that subunit. The chain is Large ribosomal subunit protein bL20 from Pseudoalteromonas translucida (strain TAC 125).